The primary structure comprises 297 residues: Adrenocorticotropic hormone receptor (297 aa).

The Extracellular portion of the chain corresponds to 1–23 (MKHIINSYENINNTARNNSDCPR). 2 N-linked (GlcNAc...) asparagine glycosylation sites follow: Asn12 and Asn17. 2 disulfide bridges follow: Cys21–Cys253 and Cys245–Cys251. Residues 24–49 (VVLPEEIFFTISIVGVLENLIVLLAV) form a helical membrane-spanning segment. Residues 50-58 (FKNKNLQAP) are Cytoplasmic-facing. Residues 59–79 (MYFFICSLAISDMLGSLYKIL) form a helical membrane-spanning segment. Residues 80–104 (ENILIILRNMGYLKPRGSFETTADD) lie on the Extracellular side of the membrane. Residues 105 to 126 (IIDSLFVLSLLGSIFSLSVIAA) form a helical membrane-spanning segment. Over 127 to 147 (DRYITIFHALRYHSIVTMRRT) the chain is Cytoplasmic. The chain crosses the membrane as a helical span at residues 148-168 (VVVLTVIWTFCTGTGITMVIF). Over 169–180 (SHHVPTVITFTS) the chain is Extracellular. A helical membrane pass occupies residues 181–199 (LFPLMLVFILCLYVHMFLL). Residues 200–217 (ARSHTRKISTLPRANMKG) are Cytoplasmic-facing. A helical transmembrane segment spans residues 218–244 (AITLTILLGVFIFCWAPFVLHVLLMTF). Residues 245-256 (CPSNPYCACYMS) are Extracellular-facing. A helical transmembrane segment spans residues 257-278 (LFQVNGMLIMCNAVIDPFIYAF). Residues 279–297 (RSPELRDAFKKMIFCSRYW) lie on the Cytoplasmic side of the membrane. Cys293 is lipidated: S-palmitoyl cysteine.

The protein belongs to the G-protein coupled receptor 1 family. In terms of assembly, homodimer. Interacts with corticotropin (ACTH). Interacts with MRAP; this interaction targets MC2R to the plasma membrane. Interacts with MRAP2; competing with MRAP for binding to MC2R and impairing the binding of corticotropin (ACTH). Post-translationally, ubiquitinated by MGRN1 that may be involved in post-endocytic trafficking and/or degradation of internalized receptor. Melanocytes and corticoadrenal tissue.

It is found in the cell membrane. In terms of biological role, hormone receptor primarily expressed in adrenal cortex that plays a key role in regulating adrenocortical function. Upon corticotropin (ACTH) binding, facilitates the release of adrenal glucocorticoids, including cortisol and corticosterone. In addition, MC2R is required for fetal and neonatal adrenal gland development. Mechanistically, activates adenylate cyclase (cAMP), the MAPK cascade as well as the cAMP-dependent protein kinase A pathway leading to steroidogenic factor 1/NR5A1-mediated transcriptional activation. The polypeptide is Adrenocorticotropic hormone receptor (MC2R) (Homo sapiens (Human)).